The following is a 329-amino-acid chain: Biotin synthase (329 aa).

The Radical SAM core domain occupies 46–275 (YYGNKVKLNM…TKEIRISGGR (230 aa)). Cys64, Cys68, and Cys71 together coordinate [4Fe-4S] cluster. [2Fe-2S] cluster is bound by residues Cys108, Cys140, Cys200, and Arg270.

The protein belongs to the radical SAM superfamily. Biotin synthase family. In terms of assembly, homodimer. It depends on [4Fe-4S] cluster as a cofactor. The cofactor is [2Fe-2S] cluster.

It carries out the reaction (4R,5S)-dethiobiotin + (sulfur carrier)-SH + 2 reduced [2Fe-2S]-[ferredoxin] + 2 S-adenosyl-L-methionine = (sulfur carrier)-H + biotin + 2 5'-deoxyadenosine + 2 L-methionine + 2 oxidized [2Fe-2S]-[ferredoxin]. Its pathway is cofactor biosynthesis; biotin biosynthesis; biotin from 7,8-diaminononanoate: step 2/2. Functionally, catalyzes the conversion of dethiobiotin (DTB) to biotin by the insertion of a sulfur atom into dethiobiotin via a radical-based mechanism. This is Biotin synthase from Anoxybacillus flavithermus (strain DSM 21510 / WK1).